A 237-amino-acid chain; its full sequence is Sugar fermentation stimulation protein homolog (237 aa).

Belongs to the SfsA family.

The sequence is that of Sugar fermentation stimulation protein homolog from Pseudomonas putida (strain GB-1).